The following is a 52-amino-acid chain: Small ribosomal subunit protein uS14 (52 aa).

Residues C17, C20, C35, and C38 each coordinate Zn(2+).

This sequence belongs to the universal ribosomal protein uS14 family. Zinc-binding uS14 subfamily. As to quaternary structure, part of the 30S ribosomal subunit. Zn(2+) serves as cofactor.

Its function is as follows. Binds 16S rRNA, required for the assembly of 30S particles. This is Small ribosomal subunit protein uS14 from Halobacterium salinarum (strain ATCC 700922 / JCM 11081 / NRC-1) (Halobacterium halobium).